Here is an 82-residue protein sequence, read N- to C-terminus: Sulfur carrier protein TusA (82 aa).

The active-site Cysteine persulfide intermediate is the C20.

The protein belongs to the sulfur carrier protein TusA family.

The protein resides in the cytoplasm. Sulfur carrier protein which probably makes part of a sulfur-relay system. In Aeromonas hydrophila subsp. hydrophila (strain ATCC 7966 / DSM 30187 / BCRC 13018 / CCUG 14551 / JCM 1027 / KCTC 2358 / NCIMB 9240 / NCTC 8049), this protein is Sulfur carrier protein TusA.